Reading from the N-terminus, the 468-residue chain is Midnolin (468 aa).

The Ubiquitin-like domain maps to 31–105 (MSLAIHSTTG…LTLVPTVEAG (75 aa)). 2 disordered regions span residues 182-264 (PSIA…RSRK) and 404-447 (LRRK…LGLD). The segment covering 185 to 201 (ASPVSSPCRPVSSAARV) has biased composition (low complexity). Pro residues predominate over residues 202-213 (PPVPTSPSPASP). 2 stretches are compositionally biased toward low complexity: residues 237–260 (SPTA…SPAP) and 419–431 (SPSR…DSSS).

In terms of assembly, interacts with GCK; the interaction occurs preferentially at low glucose levels. Interacts with the proteasome.

The protein localises to the nucleus. It is found in the nucleolus. The protein resides in the cytoplasm. Its subcellular location is the cytosol. Facilitates the ubiquitin-independent proteasomal degradation of stimulus-induced transcription factors such as FOSB, EGR1, NR4A1, and IRF4 to the proteasome for degradation. Promotes also the degradation of other substrates such as CBX4. Plays a role in inhibiting the activity of glucokinase GCK and both glucose-induced and basal insulin secretion. The chain is Midnolin (MIDN) from Homo sapiens (Human).